The primary structure comprises 326 residues: Eukaryotic translation initiation factor 3 subunit I (326 aa).

WD repeat units follow at residues 8 to 47 (GHER…RLGT), 50 to 89 (GHQG…VIAS), 145 to 184 (MTES…KVVD), 188 to 227 (DHSA…CLKT), and 285 to 326 (GHFG…NIFE).

The protein belongs to the eIF-3 subunit I family. As to quaternary structure, component of the eukaryotic translation initiation factor 3 (eIF-3) complex. The eIF-3 complex interacts with pix.

Its subcellular location is the cytoplasm. Component of the eukaryotic translation initiation factor 3 (eIF-3) complex, which is involved in protein synthesis of a specialized repertoire of mRNAs and, together with other initiation factors, stimulates binding of mRNA and methionyl-tRNAi to the 40S ribosome. The eIF-3 complex specifically targets and initiates translation of a subset of mRNAs involved in cell proliferation. In Drosophila simulans (Fruit fly), this protein is Eukaryotic translation initiation factor 3 subunit I.